An 83-amino-acid polypeptide reads, in one-letter code: U5-theraphotoxin-Hs1c (83 aa).

The N-terminal stretch at 1 to 21 (MKTSMFLTLTGLVLLFVVCYA) is a signal peptide. Positions 22–49 (SESEEKEFPKELLSSIFAADSDFKVEER) are excised as a propeptide. 3 disulfides stabilise this stretch: Cys-51/Cys-63, Cys-56/Cys-68, and Cys-62/Cys-75.

It belongs to the neurotoxin 10 (Hwtx-1) family. 51 (Hntx-8) subfamily. Hntx-8 sub-subfamily. Expressed by the venom gland.

Its subcellular location is the secreted. Functionally, agglutinates erythrocytes. This chain is U5-theraphotoxin-Hs1c, found in Cyriopagopus schmidti (Chinese bird spider).